The sequence spans 320 residues: MNLVRTAMLLAFMTALFMFVGFLIGGRAGMMIAFVIAAGMNFFSYWNSDRMVLSAYRAQQVDERNAPEFFRIVRDLARNAGLPMPKVYLYDSPQPNAFATGRNPENAAVAASTGLLSALSAEEVAGVMAHELAHIQNRDTLTMTITATLAGAISMLGNFAFFFGGNRENNSNPLGFVGVIVAMIVAPLAAMLVQMAISRTREYSADRRGAEICGNPLWLASALGKIARGAAHVPNEDAERNPATAHMFIINPLSGERMDNLFSTHPNTENRIAALHDMAQSGMNVSTSPARAANPSRKSRSVPDTGLGRGGSQPPKGPWS.

The next 2 helical transmembrane spans lie at 6–26 (TAMLLAFMTALFMFVGFLIGG) and 28–48 (AGMMIAFVIAAGMNFFSYWNS). Position 130 (histidine 130) interacts with Zn(2+). Residue glutamate 131 is part of the active site. Zn(2+) is bound at residue histidine 134. 2 helical membrane passes run 145-165 (ITATLAGAISMLGNFAFFFGG) and 173-193 (PLGFVGVIVAMIVAPLAAMLV). Glutamate 202 serves as a coordination point for Zn(2+). The segment at 283–320 (MNVSTSPARAANPSRKSRSVPDTGLGRGGSQPPKGPWS) is disordered.

Belongs to the peptidase M48B family. Requires Zn(2+) as cofactor.

The protein resides in the cell inner membrane. The chain is Protease HtpX homolog from Rhizobium johnstonii (strain DSM 114642 / LMG 32736 / 3841) (Rhizobium leguminosarum bv. viciae).